A 388-amino-acid polypeptide reads, in one-letter code: Tumor protein p53-inducible protein 13 (388 aa).

A signal peptide spans 1 to 27 (MVPPPPPPSRLLLVALVGLLSLHEVVA). At 28–304 (EPAEEAGTRC…ARGPTPRTEE (277 aa)) the chain is on the extracellular side. Residues 305-325 (AAWAAMALTFLLVLLTLATLC) form a helical membrane-spanning segment. Residues 326 to 388 (TRLHRNFRRS…DSGPDSESSD (63 aa)) are Cytoplasmic-facing. Positions 361–372 (PSRRIKRSRRRP) are enriched in basic residues. Residues 361–388 (PSRRIKRSRRRPLLPPTPDSGPDSESSD) form a disordered region.

It is found in the cell membrane. The protein localises to the cytoplasm. Functionally, may act as a tumor suppressor. Inhibits tumor cell growth, when overexpressed. The polypeptide is Tumor protein p53-inducible protein 13 (Tp53i13) (Rattus norvegicus (Rat)).